The following is a 186-amino-acid chain: Large ribosomal subunit protein bL17 (186 aa).

The tract at residues 123–186 is disordered; that stretch reads SEADRARRVK…ADEAEGSSED (64 aa). Over residues 139–177 the composition is skewed to low complexity; that stretch reads EAAAAAPQAAVEPEAVEAAPAPDAPEAAPEAEAAAPQPA.

This sequence belongs to the bacterial ribosomal protein bL17 family. As to quaternary structure, part of the 50S ribosomal subunit. Contacts protein L32.

This chain is Large ribosomal subunit protein bL17, found in Mycobacterium avium (strain 104).